Reading from the N-terminus, the 410-residue chain is Peptidase T (410 aa).

Zn(2+) is bound at residue His-79. The active site involves Asp-81. Residue Asp-142 coordinates Zn(2+). Glu-176 functions as the Proton acceptor in the catalytic mechanism. Zn(2+) is bound by residues Glu-177, Asp-199, and His-381.

This sequence belongs to the peptidase M20B family. Requires Zn(2+) as cofactor.

The protein resides in the cytoplasm. The enzyme catalyses Release of the N-terminal residue from a tripeptide.. In terms of biological role, cleaves the N-terminal amino acid of tripeptides. The chain is Peptidase T from Bacillus anthracis (strain A0248).